Here is a 613-residue protein sequence, read N- to C-terminus: Dihydroxy-acid dehydratase (613 aa).

Asp-81 serves as a coordination point for Mg(2+). Residue Cys-122 coordinates [2Fe-2S] cluster. The Mg(2+) site is built by Asp-123 and Lys-124. Lys-124 carries the N6-carboxylysine modification. Cys-195 contacts [2Fe-2S] cluster. Glu-491 contributes to the Mg(2+) binding site. Catalysis depends on Ser-517, which acts as the Proton acceptor.

The protein belongs to the IlvD/Edd family. In terms of assembly, homodimer. [2Fe-2S] cluster serves as cofactor. Mg(2+) is required as a cofactor.

The catalysed reaction is (2R)-2,3-dihydroxy-3-methylbutanoate = 3-methyl-2-oxobutanoate + H2O. It carries out the reaction (2R,3R)-2,3-dihydroxy-3-methylpentanoate = (S)-3-methyl-2-oxopentanoate + H2O. It functions in the pathway amino-acid biosynthesis; L-isoleucine biosynthesis; L-isoleucine from 2-oxobutanoate: step 3/4. It participates in amino-acid biosynthesis; L-valine biosynthesis; L-valine from pyruvate: step 3/4. Its function is as follows. Functions in the biosynthesis of branched-chain amino acids. Catalyzes the dehydration of (2R,3R)-2,3-dihydroxy-3-methylpentanoate (2,3-dihydroxy-3-methylvalerate) into 2-oxo-3-methylpentanoate (2-oxo-3-methylvalerate) and of (2R)-2,3-dihydroxy-3-methylbutanoate (2,3-dihydroxyisovalerate) into 2-oxo-3-methylbutanoate (2-oxoisovalerate), the penultimate precursor to L-isoleucine and L-valine, respectively. This is Dihydroxy-acid dehydratase from Photobacterium profundum (strain SS9).